A 3739-amino-acid chain; its full sequence is Pikromycin polyketide synthase component PikAII (3739 aa).

The Ketosynthase family 3 (KS3) 1 domain maps to 35-463; that stretch reads GEPVAIVGMA…GTNAHVVLEE (429 aa). Module stretches follow at residues 38–1517 and 1542–3642; these read VAIV…EFLL and VAIV…GHLL. Cys-208 acts as the Acyl-thioester intermediate; for beta-ketoacyl synthase 1 activity in catalysis. Catalysis depends on for beta-ketoacyl synthase 1 activity residues His-343 and His-383. The segment at 572–877 is acyltransferase 1; sequence FVFPGQGTQW…ERLVTSLAEA (306 aa). Catalysis depends on Ser-662, which acts as the Acyl-ester intermediate; for acyltransferase 1 activity. Residues 1150–1343 form a C2-type beta-ketoacyl reductase 1 region; that stretch reads GTVLVTGAEE…VTSVAWSPWE (194 aa). Tyr-1313 (for C2-type beta-ketoacyl reductase 1 and probable racemase activities) is an active-site residue. In terms of domain architecture, Carrier 1 spans 1445–1520; the sequence is RRMQELVREH…TLAEFLLAEI (76 aa). O-(pantetheine 4'-phosphoryl)serine is present on Ser-1480. Residues 1539–1967 form the Ketosynthase family 3 (KS3) 2 domain; that stretch reads DEPVAIVGMA…GTNAHIVLEE (429 aa). Cys-1712 serves as the catalytic Acyl-thioester intermediate; for beta-ketoacyl synthase 2 activity. Catalysis depends on for beta-ketoacyl synthase 2 activity residues His-1847 and His-1887. The acyltransferase 2 stretch occupies residues 2069-2374; the sequence is FVFPGQGTQW…HRLTTSLAEA (306 aa). The active-site Acyl-ester intermediate; for acyltransferase 2 activity is the Ser-2159. Positions 2428–2553 are N-terminal hotdog fold; it reads HPLLGAAVAL…GVLAARADRT (126 aa). The interval 2428-2703 is dehydratase; sequence HPLLGAAVAL…LTVLPVDPAQ (276 aa). The PKS/mFAS DH domain maps to 2428-2705; the sequence is HPLLGAAVAL…VLPVDPAQLA (278 aa). His-2460 serves as the catalytic Proton acceptor; for dehydratase activity. A C-terminal hotdog fold region spans residues 2567-2705; sequence AEPVDVDGLY…VLPVDPAQLA (139 aa). Asp-2629 (proton donor; for dehydratase activity) is an active-site residue. The tract at residues 2959–3267 is enoyl reductase; the sequence is GSLESLTAAP…QARHTGKVVL (309 aa). Tyr-3005 serves as the catalytic For enoyl reductase activity. NADP(+) contacts are provided by residues 3092–3109, 3285–3288, 3309–3312, 3338–3339, Lys-3388, and 3412–3413; these read LLVH…VQLA, TGAL, SRRG, DV, and FS. Positions 3277 to 3458 are beta-ketoacyl reductase 2; that stretch reads GTVLLTGGTG…LSLGWGLWAE (182 aa). The For beta-ketoacyl reductase 2 activity role is filled by Tyr-3427. A Carrier 2 domain is found at 3570-3645; the sequence is AHLRDLVRTH…ELAGHLLDEL (76 aa). Ser-3605 carries the O-(pantetheine 4'-phosphoryl)serine modification.

As to quaternary structure, homodimer. Pikromycin PKS consists of a combination of multimodular (PikAI and PikAII) and monomodular (PikAIII and PikAIV) polypeptides each coding for a functional synthase subunit which participates in 1 (monomodular) or 2 (multimodular) of the six FAS-like elongation steps required for formation of the polyketide. Module 1, 2, 3, 4, 5, and 6 participating in biosynthesis steps 1, 2, 3, 4, 5, and 6, respectively. Requires pantetheine 4'-phosphate as cofactor.

It catalyses the reaction 5 (S)-methylmalonyl-CoA + malonyl-CoA + 5 NADPH + 11 H(+) = 10-deoxymethynolide + 6 CO2 + 5 NADP(+) + 6 CoA + 2 H2O. It carries out the reaction 6 (S)-methylmalonyl-CoA + malonyl-CoA + 5 NADPH + 12 H(+) = narbonolide + 7 CO2 + 5 NADP(+) + 7 CoA + 2 H2O. It functions in the pathway antibiotic biosynthesis. Involved in the biosynthesis of 12- and 14-membered ring macrolactone antibiotics such as methymycin/neomethymycin and pikromycin/narbomycin, respectively. Component of the pikromycin PKS which catalyzes the biosynthesis of both precursors 10-deoxymethynolide (12-membered ring macrolactone) and narbonolide (14-membered ring macrolactone). Chain elongation through PikAI, PikAII and PikAIII followed by thioesterase catalyzed termination results in the production of 10-deoxymethynolide, while continued elongation through PikAIV, followed by thioesterase (TE) catalyzed cyclization results in the biosynthesis of the narbonolide. The polypeptide is Pikromycin polyketide synthase component PikAII (Streptomyces venezuelae).